The primary structure comprises 1866 residues: Nucleoporin Nup188 (1866 aa).

Belongs to the Nup188 family. In terms of assembly, part of the nuclear pore complex (NPC).

It localises to the nucleus. Its subcellular location is the nuclear pore complex. Functionally, component of the nuclear pore complex (NPC), a complex required for the trafficking across the nuclear envelope. Required for proper protein transport into the nucleus. This chain is Nucleoporin Nup188, found in Drosophila melanogaster (Fruit fly).